The chain runs to 221 residues: Serine/arginine-rich splicing factor 2 (221 aa).

At serine 2 the chain carries N-acetylserine. Serine 2 bears the Phosphoserine mark. Residues 14–92 (TSLKVDNLTY…RELRVQMARY (79 aa)) form the RRM domain. A phosphothreonine mark is found at threonine 22 and threonine 25. At serine 26 the chain carries Phosphoserine. Residue lysine 52 is modified to N6-acetyllysine. Residues 92-221 (YGRPPDSHHS…SPEEEGAVSS (130 aa)) form a disordered region. Basic residues-rich tracts occupy residues 117–171 (RRSR…RSKS) and 179–189 (SRSRSRSRSRS). Phosphoserine occurs at positions 189, 191, 204, 206, 208, 212, and 220.

It belongs to the splicing factor SR family. In vitro, self-associates and binds SRSF1/SFRS1 (ASF/SF2), SNRNP70 and U2AF1 but not U2AF2. Binds SREK1/SFRS12. Interacts with CCNL1 and CCNL2. Interacts with SCAF11. Interacts with ZRSR2/U2AF1-RS2. Interacts with CCDC55 (via C-terminus). Interacts with BRDT. Post-translationally, extensively phosphorylated on serine residues in the RS domain. Phosphorylated by SRPK2 and this causes its redistribution from the nuclear speckle to nucleoplasm and controls cell fate decision in response to cisplatin treatment. KAT5/TIP60 inhibits its phosphorylation by preventing SRPK2 nuclear translocation. In terms of processing, acetylation on Lys-52 by KAT5/TIP60 promotes its proteasomal degradation. This effect is counterbalanced by HDAC6, which positively controls SRSF2 protein level by deacetylating it and preventing its proteasomal degradation.

The protein localises to the nucleus. It localises to the nucleoplasm. It is found in the nucleus speckle. Necessary for the splicing of pre-mRNA. It is required for formation of the earliest ATP-dependent splicing complex and interacts with spliceosomal components bound to both the 5'- and 3'-splice sites during spliceosome assembly. It also is required for ATP-dependent interactions of both U1 and U2 snRNPs with pre-mRNA. Interacts with other spliceosomal components, via the RS domains, to form a bridge between the 5'- and 3'-splice site binding components, U1 snRNP and U2AF. Binds to purine-rich RNA sequences, either 5'-AGSAGAGTA-3' (S=C or G) or 5'-GTTCGAGTA-3'. Can bind to beta-globin mRNA and commit it to the splicing pathway. The phosphorylated form (by SRPK2) is required for cellular apoptosis in response to cisplatin treatment. The sequence is that of Serine/arginine-rich splicing factor 2 (SRSF2) from Sus scrofa (Pig).